A 607-amino-acid polypeptide reads, in one-letter code: Large ribosomal subunit assembly factor BipA (607 aa).

The 196-residue stretch at 3 to 198 (HSIRNIAIIA…SIIKYAPAPN (196 aa)) folds into the tr-type G domain. Residues 15-20 (DHGKTT) and 128-131 (NKID) contribute to the GTP site.

The protein belongs to the TRAFAC class translation factor GTPase superfamily. Classic translation factor GTPase family. BipA subfamily. In terms of assembly, monomer.

The protein localises to the cytoplasm. It carries out the reaction GTP + H2O = GDP + phosphate + H(+). In terms of biological role, a 50S ribosomal subunit assembly protein with GTPase activity, required for 50S subunit assembly at low temperatures, may also play a role in translation. Binds GTP and analogs. Binds the 70S ribosome between the 30S and 50S subunits, in a similar position as ribosome-bound EF-G; it contacts a number of ribosomal proteins, both rRNAs and the A-site tRNA. The chain is Large ribosomal subunit assembly factor BipA from Buchnera aphidicola subsp. Acyrthosiphon pisum (strain APS) (Acyrthosiphon pisum symbiotic bacterium).